A 196-amino-acid chain; its full sequence is Regulator of G-protein signaling 8 (196 aa).

S26 carries the post-translational modification Phosphoserine. The RGS domain occupies 72–188; that stretch reads SFDVLLSHKY…LRSKMYLDLL (117 aa).

As to quaternary structure, interacts with GNAO1 and GNAI3.

It localises to the cell membrane. The protein resides in the membrane. It is found in the perikaryon. Its subcellular location is the cell projection. The protein localises to the dendrite. It localises to the nucleus. In terms of biological role, regulates G protein-coupled receptor signaling cascades, including signaling via muscarinic acetylcholine receptor CHRM2 and dopamine receptor DRD2. Inhibits signal transduction by increasing the GTPase activity of G protein alpha subunits, thereby driving them into their inactive GDP-bound form. Modulates the activity of potassium channels that are activated in response to DRD2 and CHRM2 signaling. The sequence is that of Regulator of G-protein signaling 8 (RGS8) from Macaca fascicularis (Crab-eating macaque).